The primary structure comprises 315 residues: Ribonuclease Z (315 aa).

The Zn(2+) site is built by H62, H64, D66, H67, H144, D215, and H273. D66 functions as the Proton acceptor in the catalytic mechanism.

It belongs to the RNase Z family. As to quaternary structure, homodimer. Zn(2+) serves as cofactor.

The catalysed reaction is Endonucleolytic cleavage of RNA, removing extra 3' nucleotides from tRNA precursor, generating 3' termini of tRNAs. A 3'-hydroxy group is left at the tRNA terminus and a 5'-phosphoryl group is left at the trailer molecule.. In terms of biological role, zinc phosphodiesterase, which displays some tRNA 3'-processing endonuclease activity. Probably involved in tRNA maturation, by removing a 3'-trailer from precursor tRNA. The polypeptide is Ribonuclease Z (Synechococcus sp. (strain CC9311)).